A 183-amino-acid chain; its full sequence is DELTA-miturgitoxin-Cp1c (183 aa).

A signal peptide spans 1-20; that stretch reads MKFSLFFSVFFLAVLHACLS. The propeptide occupies 21–47; that stretch reads ESEIDLEDEEHFMSSDSFLSEIQDESR. A Processing quadruplet motif motif is present at residues 44–47; sequence DESR. Cystine bridges form between C51–C66, C58–C75, C65–C88, C77–C86, C115–C130, C122–C139, C129–C157, and C141–C155. The segment at 164–177 is predicted alpha-helix; that stretch reads QAIEGALRIAKKLI. W181 is subject to Tryptophan amide.

Belongs to the neurotoxin 19 (CSTX) family. Double-CSTX subfamily. Post-translationally, cleavage of the propeptide depends on the processing quadruplet motif (XXXR, with at least one of X being E). As to expression, expressed by the venom gland.

The protein resides in the secreted. Its subcellular location is the target cell membrane. Functionally, spider venom toxin that exhibits cytolytic activity by forming an alpha-helix across the membrane. Lethal to insect larvae. Causes instant paralysis and death in the larvae of the flesh fly (S.carnaria) at doses of 20 ug/g, at doses of less than 10 ug/g causes reversible paralysis. Has cytolytic activity against insect Sf9 cells. Causes stable and irreversible depolarization of fly muscle fibers, leading to contracture at higher toxin concentrations. Destabilizes membranes. In Cheiracanthium punctorium (Yellow sac spider), this protein is DELTA-miturgitoxin-Cp1c.